The following is a 520-amino-acid chain: Alpha-1B adrenergic receptor (520 aa).

Residues 1–45 (MNPDLDTGHNTSAPAHWGELKNANFTGPNQTSSNSTLPQLDITRA) lie on the Extracellular side of the membrane. Asn10, Asn24, Asn29, and Asn34 each carry an N-linked (GlcNAc...) asparagine glycan. A helical transmembrane segment spans residues 46–70 (ISVGLVLGAFILFAIVGNILVILSV). At 71–83 (ACNRHLRTPTNYF) the chain is on the cytoplasmic side. A helical membrane pass occupies residues 84–105 (IVNLAMADLLLSFTVLPFSAAL). Residues 106 to 115 (EVLGYWVLGR) lie on the Extracellular side of the membrane. The chain crosses the membrane as a helical span at residues 116 to 141 (IFCDIWAAVDVLCCTASILSLCAISI). A disulfide bridge connects residues Cys118 and Cys195. The Cytoplasmic portion of the chain corresponds to 142–161 (DRYIGVRYSLQYPTLVTRRK). The helical transmembrane segment at 162–184 (AILALLSVWVLSTVISIGPLLGW) threads the bilayer. The Extracellular segment spans residues 185 to 201 (KEPAPNDDKECGVTEEP). A helical membrane pass occupies residues 202-224 (FYALFSSLGSFYIPLAVILVMYC). Residues 225-295 (RVYIVAKRTT…FSREKKAAKT (71 aa)) lie on the Cytoplasmic side of the membrane. Thr264 bears the Phosphothreonine mark. A helical membrane pass occupies residues 296–319 (LGIVVGMFILCWLPFFIALPLGSL). Residues 320–326 (FSTLKPP) are Extracellular-facing. Residues 327 to 351 (DAVFKVVFWLGYFNSCLNPIIYPCS) form a helical membrane-spanning segment. Residues 352–520 (SKEFKRAFVR…SNMPLAPGQF (169 aa)) are Cytoplasmic-facing. Cys365 carries the S-palmitoyl cysteine lipid modification. The short motif at 368 to 380 (RGRGRRRRRRRRR) is the Nuclear localization signal element. 2 disordered regions span residues 394-432 (GGSLERSQSRKDSLDDSGSCLSGSQRTLPSASPSPGYLG) and 479-520 (LTEP…PGQF).

The protein belongs to the G-protein coupled receptor 1 family. Adrenergic receptor subfamily. ADRA1B sub-subfamily. In terms of assembly, homo- and heterooligomer. Heterooligomerizes with ADRA1B homooligomers in cardiac myocytes. Interacts with CAVIN4.

The protein localises to the nucleus membrane. It is found in the cell membrane. Its subcellular location is the cytoplasm. It localises to the membrane. The protein resides in the caveola. Its function is as follows. This alpha-adrenergic receptor mediates its action by association with G proteins that activate a phosphatidylinositol-calcium second messenger system. Its effect is mediated by G(q) and G(11) proteins. Nuclear ADRA1A-ADRA1B heterooligomers regulate phenylephrine (PE)-stimulated ERK signaling in cardiac myocytes. In Homo sapiens (Human), this protein is Alpha-1B adrenergic receptor (ADRA1B).